The sequence spans 279 residues: Mirror-image polydactyly gene 1 protein homolog (279 aa).

A compositionally biased stretch (basic and acidic residues) spans 1 to 11 (MNSEQSIRELG). The disordered stretch occupies residues 1–21 (MNSEQSIRELGNEVPSEDLEL). 2 coiled-coil regions span residues 65-169 (LNKE…MLEN) and 218-255 (AEEM…STNN). The disordered stretch occupies residues 247-268 (KQNQTSTNNTKHPTAKNNQEHT). Positions 248–263 (QNQTSTNNTKHPTAKN) are enriched in polar residues.

This Mus musculus (Mouse) protein is Mirror-image polydactyly gene 1 protein homolog (Mipol1).